The sequence spans 149 residues: Large ribosomal subunit protein bL9 (149 aa).

This sequence belongs to the bacterial ribosomal protein bL9 family.

Binds to the 23S rRNA. This Acidothermus cellulolyticus (strain ATCC 43068 / DSM 8971 / 11B) protein is Large ribosomal subunit protein bL9.